The chain runs to 360 residues: MELARNDQTEAALRGEANVWKSINGIADFMVMKCALELRIPDIVHSHSAPITLAQIASSVPDSPSLNLSYLSRIMRLLVRRKIFSQHKSLDGEEVLYGPTHSSRLLLSKTTLPDQVTLAPFVAFMTHPYLSAPWSCLARCVKEGGNGFEMVHGGRQLWDLSPGNPEFNKVFNDGMASTARITTMAILSEYRDVFCGICSLVDVGGEFGGSISAIVKSHPHIKGINYDLPHVVATAPTYTGLVSHVGGNMFEWIPTAVAVFMKWILHDWADEDCVKILKNCRRAMPEKGGKIIIVDIVLEPEGNGLFDDAAVMLDIALMALTRGKERTEKEWKRVLEEGGFPRYQILKIPALTSVIEAYPQ.

D227 is an S-adenosyl-L-methionine binding site. The active-site Proton acceptor is H266.

Belongs to the class I-like SAM-binding methyltransferase superfamily. Cation-independent O-methyltransferase family. As to quaternary structure, homodimer. Highly expressed in lupulin glands. Detected in cones, male flowers and roots.

It localises to the cytoplasm. It carries out the reaction xanthohumol + S-adenosyl-L-methionine = 4-O-methylxanthohumol + S-adenosyl-L-homocysteine + H(+). The enzyme catalyses desmethylxanthohumol + S-adenosyl-L-methionine = xanthohumol + S-adenosyl-L-homocysteine + H(+). It catalyses the reaction isoliquiritigenin + S-adenosyl-L-methionine = 2'-O-methylisoliquiritigenin + S-adenosyl-L-homocysteine + H(+). The catalysed reaction is trans-resveratrol + S-adenosyl-L-methionine = 3-methoxy-4',5-dihydroxy-trans-stilbene + S-adenosyl-L-homocysteine + H(+). Its pathway is secondary metabolite biosynthesis. With respect to regulation, inhibited by S-adenosyl homocysteine. Its function is as follows. Involved in the biosynthesis of prenylated phenolics natural products which contribute to the bitter taste of beer and display broad biological activities. O-methyltransferase with a low substrate selectivity. Methylates chalconaringenin, desmethylxanthohumol, xanthohumol, isoliquiritigenin, butein, 2',4-dihydroxychalcone, resveratrol, genistein and guaiacol. Catalyzes the biosynthesis of 2',4'-dihydroxy-4,6'-dimethoxy-3'-prenylchalcone (4-O-methylxanthohumol). In Humulus lupulus (European hop), this protein is Xanthohumol 4-O-methyltransferase.